The primary structure comprises 309 residues: tRNA-cytidine(32) 2-sulfurtransferase (309 aa).

The PP-loop motif motif lies at 45–50 (SGGKDS). 3 residues coordinate [4Fe-4S] cluster: Cys120, Cys123, and Cys211.

It belongs to the TtcA family. As to quaternary structure, homodimer. Requires Mg(2+) as cofactor. [4Fe-4S] cluster is required as a cofactor.

The protein localises to the cytoplasm. The enzyme catalyses cytidine(32) in tRNA + S-sulfanyl-L-cysteinyl-[cysteine desulfurase] + AH2 + ATP = 2-thiocytidine(32) in tRNA + L-cysteinyl-[cysteine desulfurase] + A + AMP + diphosphate + H(+). It participates in tRNA modification. Its function is as follows. Catalyzes the ATP-dependent 2-thiolation of cytidine in position 32 of tRNA, to form 2-thiocytidine (s(2)C32). The sulfur atoms are provided by the cysteine/cysteine desulfurase (IscS) system. The protein is tRNA-cytidine(32) 2-sulfurtransferase of Psychromonas ingrahamii (strain DSM 17664 / CCUG 51855 / 37).